Reading from the N-terminus, the 247-residue chain is MDLMMALKRVCRVLLFVTQMYVFSGRGSLSFEYSQPVAQPLKDTFPSSTTATSIKATTTKMPEYMEICPSNGQCSRLASDCMTCATNYSCIYGKLVTFNCTAKNGVVCFDENSQRQEYFTISMACQFCWQLPPSDYVCNLSSSCKTISCPRQRYNTTCTVLDHVHCLGNRTFPKMLYCNWTGGYKWSTALALSITLGGFGADRFYLGQWREGLGKLFSFGGLGIWTLIDVFLISVGYVGPADGSLYI.

Residues 1–30 (MDLMMALKRVCRVLLFVTQMYVFSGRGSLS) form the signal peptide. Residues 31–179 (FEYSQPVAQP…RTFPKMLYCN (149 aa)) lie on the Extracellular side of the membrane. N-linked (GlcNAc...) asparagine glycans are attached at residues Asn87, Asn99, Asn139, Asn155, Asn169, and Asn179. Residues 180-200 (WTGGYKWSTALALSITLGGFG) form a helical membrane-spanning segment. A TM2 domain is found at 183–231 (GYKWSTALALSITLGGFGADRFYLGQWREGLGKLFSFGGLGIWTLIDVF). Residues 201-215 (ADRFYLGQWREGLGK) lie on the Cytoplasmic side of the membrane. The helical transmembrane segment at 216-236 (LFSFGGLGIWTLIDVFLISVG) threads the bilayer. The Extracellular segment spans residues 237–247 (YVGPADGSLYI).

The protein belongs to the TM2 family.

The protein localises to the membrane. The protein is TM2 domain-containing protein 3 (tm2d3) of Xenopus laevis (African clawed frog).